The following is a 188-amino-acid chain: Probable thiol:disulfide interchange protein DsbE-2 (188 aa).

The Cytoplasmic segment spans residues 1-11 (MSMLHQQKRKN). The helical transmembrane segment at 12 to 32 (HFVFLPLVILLAVCALLFIGL) threads the bilayer. The Periplasmic portion of the chain corresponds to 33–188 (QQDPQKIASA…KLEAENAKVR (156 aa)). One can recognise a Thioredoxin domain in the interval 42-179 (ALIGKPVPTF…QEMFIPEWQK (138 aa)). A disulfide bond links Cys82 and Cys85.

Belongs to the thioredoxin family. DsbE subfamily.

The protein localises to the cell inner membrane. Its function is as follows. Could be involved in disulfide bond formation. Could catalyzes a late, reductive step in the assembly of periplasmic NrfA c-type cytochrome, probably the reduction of disulfide bonds of the apocytochrome c to allow covalent linkage with the heme. Possible subunit of a heme lyase. The polypeptide is Probable thiol:disulfide interchange protein DsbE-2 (nrfX) (Pasteurella multocida (strain Pm70)).